The following is a 107-amino-acid chain: U1-lycotoxin-Ls1l (107 aa).

The N-terminal stretch at 1-20 (MMKVLVVVALLVTLISYSSS) is a signal peptide. A propeptide spanning residues 21–41 (EGIDDLEADELLSLMANEQTR) is cleaved from the precursor. Cystine bridges form between C44-C59, C51-C68, C58-C86, and C70-C84.

Belongs to the neurotoxin 19 (CSTX) family. 04 (U1-Lctx) subfamily. In terms of tissue distribution, expressed by the venom gland.

The protein localises to the secreted. The polypeptide is U1-lycotoxin-Ls1l (Lycosa singoriensis (Wolf spider)).